We begin with the raw amino-acid sequence, 72 residues long: Translation initiation factor IF-1 (72 aa).

An S1-like domain is found at 1 to 72; the sequence is MSKEEAIEVE…SRGRITYRAK (72 aa).

It belongs to the IF-1 family. Component of the 30S ribosomal translation pre-initiation complex which assembles on the 30S ribosome in the order IF-2 and IF-3, IF-1 and N-formylmethionyl-tRNA(fMet); mRNA recruitment can occur at any time during PIC assembly.

The protein resides in the cytoplasm. One of the essential components for the initiation of protein synthesis. Stabilizes the binding of IF-2 and IF-3 on the 30S subunit to which N-formylmethionyl-tRNA(fMet) subsequently binds. Helps modulate mRNA selection, yielding the 30S pre-initiation complex (PIC). Upon addition of the 50S ribosomal subunit IF-1, IF-2 and IF-3 are released leaving the mature 70S translation initiation complex. This chain is Translation initiation factor IF-1, found in Geobacter metallireducens (strain ATCC 53774 / DSM 7210 / GS-15).